A 235-amino-acid polypeptide reads, in one-letter code: Probable inactive serine protease 37 (235 aa).

An N-terminal signal peptide occupies residues 1 to 19; the sequence is MKFIFYLSVLTGTFLFADS. Residues 20–233 enclose the Peptidase S1 domain; sequence SVQKEDPAPY…YVSWIENTAK (214 aa). 3 disulfide bridges follow: C40–C56, C131–C198, and C163–C177.

It belongs to the peptidase S1 family.

Its subcellular location is the cytoplasmic vesicle. The protein resides in the secretory vesicle. It localises to the acrosome. It is found in the secreted. Its function is as follows. Plays a role in male fertility. May have a role in sperm migration or binding to zona-intact eggs. Involved in the activation of the proacrosin/acrosin system. The sequence is that of Probable inactive serine protease 37 from Macaca fascicularis (Crab-eating macaque).